The following is a 241-amino-acid chain: Uridylate kinase (241 aa).

15-18 (KLSG) provides a ligand contact to ATP. Positions 23 to 28 (GSEGFG) are involved in allosteric activation by GTP. Residue Gly57 participates in UMP binding. ATP is bound by residues Gly58 and Arg62. Residues Asp77 and 138–145 (TGNPFFTT) each bind UMP. Positions 165, 171, and 174 each coordinate ATP.

The protein belongs to the UMP kinase family. As to quaternary structure, homohexamer.

The protein localises to the cytoplasm. The catalysed reaction is UMP + ATP = UDP + ADP. Its pathway is pyrimidine metabolism; CTP biosynthesis via de novo pathway; UDP from UMP (UMPK route): step 1/1. With respect to regulation, allosterically activated by GTP. Inhibited by UTP. Its function is as follows. Catalyzes the reversible phosphorylation of UMP to UDP. In Vibrio vulnificus (strain CMCP6), this protein is Uridylate kinase.